A 190-amino-acid chain; its full sequence is Probable GTP-binding protein EngB (190 aa).

The 169-residue stretch at 22-190 (VKREVAFAGR…LNELLKILIP (169 aa)) folds into the EngB-type G domain. GTP contacts are provided by residues 30 to 37 (GRSNVGKS), 56 to 60 (GKTRS), 74 to 77 (DLPG), 141 to 144 (TKTD), and 173 to 175 (FSA). Mg(2+) contacts are provided by Ser-37 and Thr-58.

Belongs to the TRAFAC class TrmE-Era-EngA-EngB-Septin-like GTPase superfamily. EngB GTPase family. Mg(2+) is required as a cofactor.

Necessary for normal cell division and for the maintenance of normal septation. In Kosmotoga olearia (strain ATCC BAA-1733 / DSM 21960 / TBF 19.5.1), this protein is Probable GTP-binding protein EngB.